The primary structure comprises 193 residues: Peptide deformylase 2 (193 aa).

The Fe cation site is built by Cys-100 and His-142. Glu-143 is an active-site residue. Fe cation is bound at residue His-146.

Belongs to the polypeptide deformylase family. The cofactor is Fe(2+).

The catalysed reaction is N-terminal N-formyl-L-methionyl-[peptide] + H2O = N-terminal L-methionyl-[peptide] + formate. Removes the formyl group from the N-terminal Met of newly synthesized proteins. Requires at least a dipeptide for an efficient rate of reaction. N-terminal L-methionine is a prerequisite for activity but the enzyme has broad specificity at other positions. This is Peptide deformylase 2 from Corynebacterium efficiens (strain DSM 44549 / YS-314 / AJ 12310 / JCM 11189 / NBRC 100395).